The chain runs to 361 residues: Phosphoserine aminotransferase (361 aa).

Residue Arg-43 participates in L-glutamate binding. Residues 77-78 (AS), Trp-103, Thr-152, Asp-172, and Gln-195 each bind pyridoxal 5'-phosphate. Lys-196 is subject to N6-(pyridoxal phosphate)lysine. Residue 237-238 (NT) participates in pyridoxal 5'-phosphate binding.

The protein belongs to the class-V pyridoxal-phosphate-dependent aminotransferase family. SerC subfamily. Homodimer. Pyridoxal 5'-phosphate serves as cofactor.

The protein resides in the cytoplasm. The enzyme catalyses O-phospho-L-serine + 2-oxoglutarate = 3-phosphooxypyruvate + L-glutamate. It catalyses the reaction 4-(phosphooxy)-L-threonine + 2-oxoglutarate = (R)-3-hydroxy-2-oxo-4-phosphooxybutanoate + L-glutamate. It participates in amino-acid biosynthesis; L-serine biosynthesis; L-serine from 3-phospho-D-glycerate: step 2/3. It functions in the pathway cofactor biosynthesis; pyridoxine 5'-phosphate biosynthesis; pyridoxine 5'-phosphate from D-erythrose 4-phosphate: step 3/5. Its function is as follows. Catalyzes the reversible conversion of 3-phosphohydroxypyruvate to phosphoserine and of 3-hydroxy-2-oxo-4-phosphonooxybutanoate to phosphohydroxythreonine. The sequence is that of Phosphoserine aminotransferase from Desulfatibacillum aliphaticivorans.